The primary structure comprises 247 residues: LHFPL tetraspan subfamily member 4 protein (247 aa).

4 helical membrane-spanning segments follow: residues isoleucine 22–isoleucine 42, phenylalanine 97–phenylalanine 117, isoleucine 127–proline 147, and isoleucine 178–glycine 198.

It belongs to the LHFP family. In terms of assembly, interacts with GABA(A) receptor subunits. Identified in a complex of 720 kDa composed of LHFPL4, NLGN2, GABRA1, GABRB2, GABRG2 and GABRB3. Interacts with GABRB3. Interacts with GABRA2. Interacts with GABRG2. Interacts with GABRA1. Interacts with NLGN2; leading to mutual regulation of protein level and synaptic clustering.

The protein localises to the cell projection. It is found in the dendrite. The protein resides in the postsynaptic cell membrane. Functionally, plays a role in the regulation of inhibitory synapse formation and function by being involved in maintening gamma-aminobutyric acid receptors (GABAARs) clustering and their associated scaffold proteins at inhibitory synaptic sites. Acts in concert with NLGN2 to recruit or stabilize GABAARs. The polypeptide is LHFPL tetraspan subfamily member 4 protein (Homo sapiens (Human)).